Consider the following 156-residue polypeptide: ATP synthase subunit b (156 aa).

The chain crosses the membrane as a helical span at residues 4–26; that stretch reads GATFWGPMISFALFVWFTMKYVW.

This sequence belongs to the ATPase B chain family. In terms of assembly, F-type ATPases have 2 components, F(1) - the catalytic core - and F(0) - the membrane proton channel. F(1) has five subunits: alpha(3), beta(3), gamma(1), delta(1), epsilon(1). F(0) has three main subunits: a(1), b(2) and c(10-14). The alpha and beta chains form an alternating ring which encloses part of the gamma chain. F(1) is attached to F(0) by a central stalk formed by the gamma and epsilon chains, while a peripheral stalk is formed by the delta and b chains.

It localises to the cell inner membrane. Functionally, f(1)F(0) ATP synthase produces ATP from ADP in the presence of a proton or sodium gradient. F-type ATPases consist of two structural domains, F(1) containing the extramembraneous catalytic core and F(0) containing the membrane proton channel, linked together by a central stalk and a peripheral stalk. During catalysis, ATP synthesis in the catalytic domain of F(1) is coupled via a rotary mechanism of the central stalk subunits to proton translocation. Component of the F(0) channel, it forms part of the peripheral stalk, linking F(1) to F(0). The protein is ATP synthase subunit b of Alkalilimnicola ehrlichii (strain ATCC BAA-1101 / DSM 17681 / MLHE-1).